The primary structure comprises 181 residues: Adenine phosphoribosyltransferase (181 aa).

The protein belongs to the purine/pyrimidine phosphoribosyltransferase family. Homodimer.

The protein resides in the cytoplasm. The catalysed reaction is AMP + diphosphate = 5-phospho-alpha-D-ribose 1-diphosphate + adenine. Its pathway is purine metabolism; AMP biosynthesis via salvage pathway; AMP from adenine: step 1/1. In terms of biological role, catalyzes a salvage reaction resulting in the formation of AMP, that is energically less costly than de novo synthesis. The polypeptide is Adenine phosphoribosyltransferase (Rhodopseudomonas palustris (strain BisB5)).